Here is a 23-residue protein sequence, read N- to C-terminus: Basic phospholipase A2 CB1 (23 aa).

In terms of assembly, heterodimer of an acidic subunit and a basic chain. The acidic subunit is non-toxic, without enzymatic activity and comprises 3 peptides that are cross-linked by 7 disulfide bridges. The basic subunit is toxic, has phospholipase A2 activity and is composed of a single chain. The cofactor is Ca(2+). Post-translationally, contains 7 disulfide bonds. Expressed by the venom gland.

The protein localises to the secreted. The enzyme catalyses a 1,2-diacyl-sn-glycero-3-phosphocholine + H2O = a 1-acyl-sn-glycero-3-phosphocholine + a fatty acid + H(+). In terms of biological role, snake venom phospholipase A2 (PLA2) that shows presynaptic neurotoxicity. PLA2 catalyzes the calcium-dependent hydrolysis of the 2-acyl groups in 3-sn-phosphoglycerides. The protein is Basic phospholipase A2 CB1 of Crotalus basiliscus (Mexican west-coast rattlesnake).